Consider the following 799-residue polypeptide: Protein translocase subunit SecA (799 aa).

ATP contacts are provided by residues Q85, 103-107 (GEGKT), and D504.

This sequence belongs to the SecA family. As to quaternary structure, monomer and homodimer. Part of the essential Sec protein translocation apparatus which comprises SecA, SecYEG and auxiliary proteins SecDF. Other proteins may also be involved.

It localises to the cell membrane. Its subcellular location is the cytoplasm. It catalyses the reaction ATP + H2O + cellular proteinSide 1 = ADP + phosphate + cellular proteinSide 2.. Its function is as follows. Part of the Sec protein translocase complex. Interacts with the SecYEG preprotein conducting channel. Has a central role in coupling the hydrolysis of ATP to the transfer of proteins into and across the cell membrane, serving as an ATP-driven molecular motor driving the stepwise translocation of polypeptide chains across the membrane. The protein is Protein translocase subunit SecA of Lactobacillus gasseri (strain ATCC 33323 / DSM 20243 / BCRC 14619 / CIP 102991 / JCM 1131 / KCTC 3163 / NCIMB 11718 / NCTC 13722 / AM63).